A 546-amino-acid chain; its full sequence is Chaperonin GroEL 1 (546 aa).

ATP contacts are provided by residues 29–32 (TLGP), 86–90 (DGTTT), G414, and D499.

It belongs to the chaperonin (HSP60) family. As to quaternary structure, forms a cylinder of 14 subunits composed of two heptameric rings stacked back-to-back. Interacts with the co-chaperonin GroES.

It localises to the cytoplasm. The catalysed reaction is ATP + H2O + a folded polypeptide = ADP + phosphate + an unfolded polypeptide.. In terms of biological role, together with its co-chaperonin GroES, plays an essential role in assisting protein folding. The GroEL-GroES system forms a nano-cage that allows encapsulation of the non-native substrate proteins and provides a physical environment optimized to promote and accelerate protein folding. The sequence is that of Chaperonin GroEL 1 from Roseiflexus sp. (strain RS-1).